A 502-amino-acid polypeptide reads, in one-letter code: Histidine--tRNA ligase (502 aa).

The protein belongs to the class-II aminoacyl-tRNA synthetase family. In terms of assembly, homodimer.

The protein localises to the cytoplasm. It carries out the reaction tRNA(His) + L-histidine + ATP = L-histidyl-tRNA(His) + AMP + diphosphate + H(+). The protein is Histidine--tRNA ligase of Brucella abortus (strain S19).